Here is an 887-residue protein sequence, read N- to C-terminus: Alanine--tRNA ligase (887 aa).

Residues His-564, His-568, Cys-676, and His-680 each coordinate Zn(2+). Positions Gly-854–Lys-873 are disordered.

This sequence belongs to the class-II aminoacyl-tRNA synthetase family. Zn(2+) is required as a cofactor.

The protein resides in the cytoplasm. It catalyses the reaction tRNA(Ala) + L-alanine + ATP = L-alanyl-tRNA(Ala) + AMP + diphosphate. In terms of biological role, catalyzes the attachment of alanine to tRNA(Ala) in a two-step reaction: alanine is first activated by ATP to form Ala-AMP and then transferred to the acceptor end of tRNA(Ala). Also edits incorrectly charged Ser-tRNA(Ala) and Gly-tRNA(Ala) via its editing domain. In Bartonella henselae (strain ATCC 49882 / DSM 28221 / CCUG 30454 / Houston 1) (Rochalimaea henselae), this protein is Alanine--tRNA ligase.